Here is a 256-residue protein sequence, read N- to C-terminus: Protein crossbronx-like (256 aa).

Residues 17-179 form the UBC core domain; that stretch reads NQGYKVLAEY…AKVSILWSCQ (163 aa).

It belongs to the ubiquitin-conjugating enzyme family. FTS subfamily.

This chain is Protein crossbronx-like, found in Drosophila virilis (Fruit fly).